Consider the following 1625-residue polypeptide: Nonribosomal peptide synthetase aclP (1625 aa).

The Carrier 1 domain occupies 47 to 123 (TTMNPSSQLL…ALFTDLLSSE (77 aa)). At S84 the chain carries O-(pantetheine 4'-phosphoryl)serine. The tract at residues 127–157 (IPIPDPSDDSDDLSNPSSSTGGSPRVATPIS) is disordered. The interval 286–567 (ASSQSTVIWA…KYFQRALQLL (282 aa)) is condensation 1. The interval 614–997 (FESAVSRNPM…GRTDRQIKLR (384 aa)) is adenylation. In terms of domain architecture, Carrier 2 spans 1096–1171 (SPMEKLVGDA…HLAAAIDSGL (76 aa)). O-(pantetheine 4'-phosphoryl)serine is present on S1131. Residues 1195–1585 (EWWHKYQINE…LQARIPLALS (391 aa)) are condensation 2.

This sequence belongs to the NRP synthetase family.

It participates in mycotoxin biosynthesis. In terms of biological role, nonribosomal peptide synthetase; part of the gene cluster that mediates the biosynthesis of aspirochlorine (or antibiotic A30641), an unusual halogenated spiro compound with distinctive antifungal properties due to selective inhibition of protein biosynthesis, and which is also active against bacteria, viruses, and murine tumor cells. The non-ribosomal peptide synthetase (NRPS) aclP is responsible the formation of the diketopiperazine (DKP) core from the condensation of 2 phenylalanine residues. One Phe residue is tailored into chlorotyrosine by hydroxylation and chlorination, whereas the second Phe undergoes an unprecedented C-C bond cleavage to be converted into glycine. After formation of the DKP, sulfur is incorporated into the DKP by conjugation with glutathione by aclG, followed by its stepwise degradation to the thiol by aclI, aclJ and aclK, and the dithiol oxidation by aclT. In addition, oxygenases (aclB, aclC, aclL and aclO) and O-methyltransferases (aclM and aclU) act as tailoring enzymes to produce the intermediate dechloroaspirochlorine. Ultimately, chlorination of dechloroaspirochlorine by the halogenase aclH is the last step in the aspirochlorine pathway. The chain is Nonribosomal peptide synthetase aclP from Aspergillus oryzae (strain ATCC 42149 / RIB 40) (Yellow koji mold).